Consider the following 369-residue polypeptide: Protein FAM187B (369 aa).

The first 17 residues, 1 to 17 (MPPMLWLLLNFAAPALG), serve as a signal peptide directing secretion. Topologically, residues 18–333 (FYFSISCPSG…PGRADSVLKG (316 aa)) are extracellular. Asn-45, Asn-68, and Asn-130 each carry an N-linked (GlcNAc...) asparagine glycan. The chain crosses the membrane as a helical span at residues 334–354 (LKLVLLVGTVLVLLGALLKFI). The Cytoplasmic portion of the chain corresponds to 355 to 369 (RPSPGKRSKQVLMVK).

Belongs to the FAM187 family.

It localises to the membrane. This chain is Protein FAM187B (FAM187B), found in Macaca fascicularis (Crab-eating macaque).